Here is a 39-residue protein sequence, read N- to C-terminus: ORF8a protein (39 aa).

Positions 1-15 (MKLLIVLTCISLCSC) are cleaved as a signal peptide. The SARS ORF8 Ig-like domain occupies 16-39 (ICTVVQRCASNKPHVLEDPCKVQH).

In Homo sapiens (Human), this protein is ORF8a protein.